The primary structure comprises 469 residues: Dihydroorotate dehydrogenase (quinone), mitochondrial (469 aa).

A mitochondrion-targeting transit peptide spans 1 to 37 (MSSSAAALAWRRSLRDALLRGSAWRGAPAANSAAARL). Residues 62–82 (LLTGAMIGLAIAGGAYVSTAD) traverse the membrane as a helical segment. Residues 150-154 (AGFDK) and serine 174 each bind FMN. Residue lysine 154 participates in substrate binding. Position 199–203 (199–203 (NRCGF)) interacts with substrate. Residues 219 to 247 (HGKRKMEETSSSTSPTTSDVKQGGKAGPG) are disordered. Residues 227-236 (TSSSTSPTTS) show a composition bias toward low complexity. FMN contacts are provided by asparagine 252 and asparagine 283. 283-288 (NVSSPN) lines the substrate pocket. The active-site Nucleophile is the serine 286. Residues lysine 328 and serine 356 each contribute to the FMN site. 357-358 (NT) contributes to the substrate binding site. FMN-binding positions include glycine 380, glycine 409, and 430–431 (YT).

It belongs to the dihydroorotate dehydrogenase family. Type 2 subfamily. FMN serves as cofactor.

It is found in the mitochondrion inner membrane. It catalyses the reaction (S)-dihydroorotate + a quinone = orotate + a quinol. It participates in pyrimidine metabolism; UMP biosynthesis via de novo pathway; orotate from (S)-dihydroorotate (quinone route): step 1/1. Catalyzes the conversion of dihydroorotate to orotate with quinone as electron acceptor. The sequence is that of Dihydroorotate dehydrogenase (quinone), mitochondrial (PYRD) from Oryza sativa subsp. japonica (Rice).